The following is a 777-amino-acid chain: Translation initiation factor IF-2 (777 aa).

Disordered stretches follow at residues 30 to 54 (SPSM…QDEN) and 98 to 117 (EDSN…SFKE). Basic and acidic residues predominate over residues 98–109 (EDSNEKTNDRDS). The 171-residue stretch at 279–449 (PKPPIVTFMG…LLIAELMKLE (171 aa)) folds into the tr-type G domain. A G1 region spans residues 288–295 (GHVDHGKT). Residue 288-295 (GHVDHGKT) participates in GTP binding. Positions 313–317 (GITQH) are G2. Residues 334 to 337 (DTPG) are G3. Residues 334–338 (DTPGH) and 388–391 (NKID) contribute to the GTP site. Residues 388–391 (NKID) form a G4 region. Residues 425 to 427 (SAK) form a G5 region.

The protein belongs to the TRAFAC class translation factor GTPase superfamily. Classic translation factor GTPase family. IF-2 subfamily.

It localises to the cytoplasm. One of the essential components for the initiation of protein synthesis. Protects formylmethionyl-tRNA from spontaneous hydrolysis and promotes its binding to the 30S ribosomal subunits. Also involved in the hydrolysis of GTP during the formation of the 70S ribosomal complex. This is Translation initiation factor IF-2 from Wolbachia sp. subsp. Brugia malayi (strain TRS).